The chain runs to 704 residues: DNA-binding protein RFX2 (704 aa).

Residues 1-39 (MQNSEGGADSPASVALRPSAAAPPVPASPQRVLVQAASS) are disordered. Residues 10–20 (SPASVALRPSA) are compositionally biased toward low complexity. A Phosphoserine modification is found at Ser-28. The segment at residues 199–274 (HLQWLLDNYE…YHYYGIRLKP (76 aa)) is a DNA-binding region (RFX-type winged-helix). Residues 292–334 (QQPMHQKPRYRPAQKTDSLGDSSSHSGLHSTPEQTTAAQNQHH) form a disordered region. A compositionally biased stretch (low complexity) spans 307 to 334 (TDSLGDSSSHSGLHSTPEQTTAAQNQHH). The residue at position 416 (Ser-416) is a Phosphoserine.

Belongs to the RFX family. In terms of assembly, homodimer; probably only forms homodimers in testis. Heterodimer; heterodimerizes with RFX1 and RFX3.

It localises to the nucleus. It is found in the cytoplasm. Functionally, transcription factor that acts as a key regulator of spermatogenesis. Acts by regulating expression of genes required for the haploid phase during spermiogenesis, such as genes required for cilium assembly and function. Recognizes and binds the X-box, a regulatory motif with DNA sequence 5'-GTNRCC(0-3N)RGYAAC-3' present on promoters. Probably activates transcription of the testis-specific histone gene H1-6. The polypeptide is DNA-binding protein RFX2 (RFX2) (Pongo abelii (Sumatran orangutan)).